The primary structure comprises 539 residues: Probable quinate permease (539 aa).

The Cytoplasmic portion of the chain corresponds to 1-22 (MSILSMVEDRPTPKEVYNWRIY). A helical transmembrane segment spans residues 23–43 (LLAAVASFTSCMIGYDSAFIG). Residues 44–74 (TTISLDSFKNEFHWDSMSTAKQNLVSANIVS) are Extracellular-facing. Residues 75-95 (CYQAGAFFGAFFAYPIGHFWG) form a helical membrane-spanning segment. Topologically, residues 96–97 (RK) are cytoplasmic. A helical membrane pass occupies residues 98–118 (WGLMLSALVFTLGAGLMLGAN). Residues 119–130 (GDRGLGLIYGGR) lie on the Extracellular side of the membrane. The helical transmembrane segment at 131 to 151 (VLAGLGVGAGSNFTPIYISEL) threads the bilayer. Topologically, residues 152-159 (APPAIRGR) are cytoplasmic. The helical transmembrane segment at 160-180 (LVGVYELGWQVGGLVGFWINY) threads the bilayer. Residues 181–193 (GVEQTMAPSHKQW) lie on the Extracellular side of the membrane. Residues 194–214 (LIPFAVQLIPAGLLIIGILFV) form a helical membrane-spanning segment. Topologically, residues 215-285 (KESPRWLFLR…AWTNKRILYR (71 aa)) are cytoplasmic. A helical transmembrane segment spans residues 286-306 (LFLGSMLFFWQNGSGINAINY). At 307 to 325 (YSPTVFKSIGLKGNSSSLL) the chain is on the extracellular side. A helical membrane pass occupies residues 326–346 (TTGIFGVVKTVVTIVWLLYLI). Residues 347-352 (DHVGRR) are Cytoplasmic-facing. Residues 353–373 (LLLLIGAAGGSICMWIVGAYI) traverse the membrane as a helical segment. At 374–387 (KVVDPTHNQSDHLN) the chain is on the extracellular side. A helical membrane pass occupies residues 388–408 (GGGVAAIFFFYLWTAFYTPSW). Residues 409 to 456 (NGTPWVINSEMFDPNIRSLAQACAAGSNWLWNFLISRFTPQMFAKMDY) lie on the Cytoplasmic side of the membrane. Residues 457–477 (GVYFFFASLMLLSIPFVFFLV) form a helical membrane-spanning segment. The Extracellular segment spans residues 478-539 (PETKGIPLEN…EQVEDTDRKE (62 aa)).

The protein belongs to the major facilitator superfamily. Sugar transporter (TC 2.A.1.1) family. As to quaternary structure, interacts with creB. In terms of processing, ubiquitinated. Deubiquitinated by creB, probably to control its activity or amount.

It localises to the cell membrane. Its function is as follows. Integral membrane transporter that imports quinic acid to be catabolized as a carbon source. This chain is Probable quinate permease (qutD), found in Aspergillus niger (strain ATCC MYA-4892 / CBS 513.88 / FGSC A1513).